The primary structure comprises 197 residues: MIGRLRGIVAYKAPPWLVVDVNGVGYELEAPMSTFYDLPELGREVTLYTHYSQKEDSVSLYGFLREGERRLFRDVQKVSGIGAKIALAVLSGVTVEEFARMVQAGDITALTRIPGIGKKTAERMVLELRDRAAQFGAGGALPTGSGPAPADPLSDATVALQQLGYKPAEAARMARDAFNEGDEVATVIRKALQSALR.

Residues 1–64 form a domain I region; the sequence is MIGRLRGIVA…EDSVSLYGFL (64 aa). The domain II stretch occupies residues 65–143; sequence REGERRLFRD…QFGAGGALPT (79 aa). Residues 144 to 153 form a flexible linker region; the sequence is GSGPAPADPL. The domain III stretch occupies residues 153-197; the sequence is LSDATVALQQLGYKPAEAARMARDAFNEGDEVATVIRKALQSALR.

It belongs to the RuvA family. Homotetramer. Forms an RuvA(8)-RuvB(12)-Holliday junction (HJ) complex. HJ DNA is sandwiched between 2 RuvA tetramers; dsDNA enters through RuvA and exits via RuvB. An RuvB hexamer assembles on each DNA strand where it exits the tetramer. Each RuvB hexamer is contacted by two RuvA subunits (via domain III) on 2 adjacent RuvB subunits; this complex drives branch migration. In the full resolvosome a probable DNA-RuvA(4)-RuvB(12)-RuvC(2) complex forms which resolves the HJ.

The protein resides in the cytoplasm. In terms of biological role, the RuvA-RuvB-RuvC complex processes Holliday junction (HJ) DNA during genetic recombination and DNA repair, while the RuvA-RuvB complex plays an important role in the rescue of blocked DNA replication forks via replication fork reversal (RFR). RuvA specifically binds to HJ cruciform DNA, conferring on it an open structure. The RuvB hexamer acts as an ATP-dependent pump, pulling dsDNA into and through the RuvAB complex. HJ branch migration allows RuvC to scan DNA until it finds its consensus sequence, where it cleaves and resolves the cruciform DNA. The polypeptide is Holliday junction branch migration complex subunit RuvA (Stenotrophomonas maltophilia (strain K279a)).